The primary structure comprises 196 residues: MASPEEMGDDASEIPSPPKNTYKDPDGGRQRFLLELEFIQCLANPTYIHYLAQNRYFEDEAFIGYLKYLQYWQRPEYIKFIMYPHCLYFLELLQNPNFRTAMAHPANKELAHRQQFYYWKNYRNNRLKHILPRPLPEPVPPQPPVAPSTSLPPAPSATAALSPALSPMQYNNMLSKNDTRNMGATGIDRRKRKKGI.

Positions 1-12 (MASPEEMGDDAS) are enriched in acidic residues. Disordered stretches follow at residues 1–24 (MASPEEMGDDASEIPSPPKNTYKD) and 133–196 (RPLP…KKGI). The segment covering 133–155 (RPLPEPVPPQPPVAPSTSLPPAP) has biased composition (pro residues). Low complexity predominate over residues 156–167 (SATAALSPALSP). Residues 168 to 182 (MQYNNMLSKNDTRNM) show a composition bias toward polar residues.

It belongs to the Mediator complex subunit 31 family. As to quaternary structure, component of the Mediator complex.

The protein localises to the nucleus. Functionally, component of the Mediator complex, a coactivator involved in the regulated transcription of nearly all RNA polymerase II-dependent genes. Mediator functions as a bridge to convey information from gene-specific regulatory proteins to the basal RNA polymerase II transcription machinery. Mediator is recruited to promoters by direct interactions with regulatory proteins and serves as a scaffold for the assembly of a functional preinitiation complex with RNA polymerase II and the general transcription factors. This is Mediator of RNA polymerase II transcription subunit 31 (MED31) from Arabidopsis thaliana (Mouse-ear cress).